Here is a 545-residue protein sequence, read N- to C-terminus: MGPDNRRILLATVLSVGILILWQVIFPKKTPPKPAPTPAAEVAKPAAPAAPAPGAAAPAVPAPPPDAPEETVKLAGKGFEATLTTYGGALKSLQLEGDKFRKQEKDREVQIDLVHVTAGQPYPLSLSASPELGGAADVTADPGARAPMRIVAKDASSVTFEGRVGNLAARKTFRVTGKPYELALDVELTGGAGNGTVGVLYPAFMPPDTKSGGIFSGPPLDFVRPVCRAGTTTERFDLAKEGAPEKLEGQVSWAGVDQHYFVAAVLPAEPVGTCTFARGPVKGAGVAALAIPVEGGARKLSLTVYAGPKDLDTLRGYGRGFESAIDYGAVAKFFALFARGLLYVMRWLEAIVRNWGVAIILLTVLVRLVLFPLTYKSMQSMNEMRKLQPEIEKLKAKFGDDREKMNLAVMQLYQKHKVNPLGGCLPMLLQMPVWFALYAALQTSVELYREPFLWMKDLTAHDPYFILPIAMGISSFVMQKLSPQPADNAQAKMMLYFFPGFFTVIMLFVPGGLTLYIFVNNLLSIVQQQLMMKHQRAAPTPAAGK.

Residues 8 to 28 form a helical membrane-spanning segment; the sequence is ILLATVLSVGILILWQVIFPK. Residues 31-69 form a disordered region; it reads PPKPAPTPAAEVAKPAAPAAPAPGAAAPAVPAPPPDAPE. The segment covering 38-59 has biased composition (low complexity); that stretch reads PAAEVAKPAAPAAPAPGAAAPA. The next 5 membrane-spanning stretches (helical) occupy residues 325 to 345, 355 to 375, 421 to 441, 458 to 478, and 497 to 517; these read IDYGAVAKFFALFARGLLYVM, WGVAIILLTVLVRLVLFPLTY, LGGCLPMLLQMPVWFALYAAL, LTAHDPYFILPIAMGISSFVM, and FFPGFFTVIMLFVPGGLTLYI.

The protein belongs to the OXA1/ALB3/YidC family. Type 1 subfamily. As to quaternary structure, interacts with the Sec translocase complex via SecD. Specifically interacts with transmembrane segments of nascent integral membrane proteins during membrane integration.

Its subcellular location is the cell inner membrane. In terms of biological role, required for the insertion and/or proper folding and/or complex formation of integral membrane proteins into the membrane. Involved in integration of membrane proteins that insert both dependently and independently of the Sec translocase complex, as well as at least some lipoproteins. Aids folding of multispanning membrane proteins. The chain is Membrane protein insertase YidC from Anaeromyxobacter dehalogenans (strain 2CP-C).